We begin with the raw amino-acid sequence, 171 residues long: UPF0763 protein HPSH_03535 (171 aa).

This sequence belongs to the UPF0763 family.

The chain is UPF0763 protein HPSH_03535 from Helicobacter pylori (strain Shi470).